The sequence spans 367 residues: tRNA/tmRNA (uracil-C(5))-methyltransferase (367 aa).

The S-adenosyl-L-methionine site is built by Gln-190, Tyr-218, Asn-223, Glu-239, and Asp-299. Cys-324 functions as the Nucleophile in the catalytic mechanism. Glu-358 acts as the Proton acceptor in catalysis.

This sequence belongs to the class I-like SAM-binding methyltransferase superfamily. RNA M5U methyltransferase family. TrmA subfamily.

The enzyme catalyses uridine(54) in tRNA + S-adenosyl-L-methionine = 5-methyluridine(54) in tRNA + S-adenosyl-L-homocysteine + H(+). It catalyses the reaction uridine(341) in tmRNA + S-adenosyl-L-methionine = 5-methyluridine(341) in tmRNA + S-adenosyl-L-homocysteine + H(+). Dual-specificity methyltransferase that catalyzes the formation of 5-methyluridine at position 54 (m5U54) in all tRNAs, and that of position 341 (m5U341) in tmRNA (transfer-mRNA). The polypeptide is tRNA/tmRNA (uracil-C(5))-methyltransferase (Yersinia enterocolitica serotype O:8 / biotype 1B (strain NCTC 13174 / 8081)).